We begin with the raw amino-acid sequence, 561 residues long: MLPALRLMTCALLTFFTTLSHASQCPDWSHARASSEITALQQQIASWDDSYHRQGLSQIPDELYDQSRQKLNDWRSCFAVSTPQANPLKTATGPLAHPVPHTGVNKLADEKDVKAWLKGRTDLWIQPKVDGVAVTLVYDEGRLVQAISRGDGTQGQDWTPQARLIKAIPQQLPQPDSLILQGELYWRLTDHVQAASGSVNARSKVAGMLARQTISPQQADAIGLFVWDWPDGPADMAQRLAGLQAMGFNHSVAYTHPLENHAQAADWREHWYRNPLPFATDGVIMRQGQRPPAQRWQASAPYWIAAWKHPYAQALAEVRKVHFNIGRTGKIAPVLELTPVRLDDRTVSRISAGSLSRWEKLDIRPGDHIAVSLAGLTIPRLDGVVSRAAERAEMSVPHASDYHESSCWQAAPGCESQFRARLVWLSGKKGLALPGVGPGTWDKLIESGHISGLLDWMTLNHAELANIPGLAERSSDKLLDSLQTARERPFQTWLKAIGLPPAGNAKLPDNWHDLAERSVEQWQAEPGIGPGRAAKLRAFFQDPHVQALSQQLQAQGISGFK.

K128 serves as the catalytic N6-AMP-lysine intermediate.

The protein belongs to the NAD-dependent DNA ligase family. LigB subfamily.

It catalyses the reaction NAD(+) + (deoxyribonucleotide)n-3'-hydroxyl + 5'-phospho-(deoxyribonucleotide)m = (deoxyribonucleotide)n+m + AMP + beta-nicotinamide D-nucleotide.. In terms of biological role, catalyzes the formation of phosphodiester linkages between 5'-phosphoryl and 3'-hydroxyl groups in double-stranded DNA using NAD as a coenzyme and as the energy source for the reaction. The sequence is that of DNA ligase B from Pseudomonas syringae pv. tomato (strain ATCC BAA-871 / DC3000).